Reading from the N-terminus, the 503-residue chain is NAD(P)H-quinone oxidoreductase chain 4, chloroplastic (503 aa).

14 helical membrane-spanning segments follow: residues 3 to 23 (FFPW…IVFF), 37 to 57 (LCIC…HFQV), 84 to 104 (GLSV…TLAA), 113 to 130 (LFHF…GLFA), 134 to 154 (LFLF…LLSM), 167 to 187 (FILY…GLTL), 208 to 228 (ALEI…SPIL), 242 to 262 (HYST…YGLI), 274 to 294 (SLFS…AALT), 305 to 325 (IAYS…SMTD), 330 to 350 (GALL…FLAG), 385 to 405 (SLAL…FGII), 416 to 436 (ILIS…SLSM), and 462 to 482 (LFLS…PDFV).

This sequence belongs to the complex I subunit 4 family.

It localises to the plastid. The protein localises to the chloroplast thylakoid membrane. It catalyses the reaction a plastoquinone + NADH + (n+1) H(+)(in) = a plastoquinol + NAD(+) + n H(+)(out). The catalysed reaction is a plastoquinone + NADPH + (n+1) H(+)(in) = a plastoquinol + NADP(+) + n H(+)(out). The protein is NAD(P)H-quinone oxidoreductase chain 4, chloroplastic of Ipomoea purpurea (Common morning glory).